The following is a 544-amino-acid chain: Inosine-5'-monophosphate dehydrogenase (544 aa).

2 CBS domains span residues 132-192 and 194-250; these read FITD…PIKS and MTTE…PYAS. NAD(+)-binding positions include 288-290 and 338-340; these read DSS and GMG. K(+) contacts are provided by Gly340 and Gly342. An IMP-binding site is contributed by Ser343. Cys345 contacts K(+). Cys345 serves as the catalytic Thioimidate intermediate. Residues 378 to 380, 401 to 402, and 425 to 429 contribute to the IMP site; these read DGG, GG, and YRGMG. The active-site Proton acceptor is Arg458. Residue Gln470 participates in IMP binding. 3 residues coordinate K(+): Glu529, Gly530, and Gly531.

The protein belongs to the IMPDH/GMPR family. As to quaternary structure, homotetramer. K(+) serves as cofactor.

The protein localises to the cytoplasm. It catalyses the reaction IMP + NAD(+) + H2O = XMP + NADH + H(+). It participates in purine metabolism; XMP biosynthesis via de novo pathway; XMP from IMP: step 1/1. With respect to regulation, mycophenolic acid (MPA) is a non-competitive inhibitor that prevents formation of the closed enzyme conformation by binding to the same site as the amobile flap. In contrast, mizoribine monophosphate (MZP) is a competitive inhibitor that induces the closed conformation. MPA is a potent inhibitor of mammalian IMPDHs but a poor inhibitor of the bacterial enzymes. MZP is a more potent inhibitor of bacterial IMPDH. In terms of biological role, catalyzes the conversion of inosine 5'-phosphate (IMP) to xanthosine 5'-phosphate (XMP), the first committed and rate-limiting step in the de novo synthesis of guanine nucleotides, and therefore plays an important role in the regulation of cell growth. The polypeptide is Inosine-5'-monophosphate dehydrogenase (Cryptococcus neoformans var. neoformans serotype D (strain JEC21 / ATCC MYA-565) (Filobasidiella neoformans)).